The primary structure comprises 153 residues: 6,7-dimethyl-8-ribityllumazine synthase (153 aa).

5-amino-6-(D-ribitylamino)uracil-binding positions include F22, 56–58, and 80–82; these read AFE and TVI. A (2S)-2-hydroxy-3-oxobutyl phosphate-binding site is contributed by 85-86; it reads AT. The active-site Proton donor is H88. A 5-amino-6-(D-ribitylamino)uracil-binding site is contributed by F113. R127 contributes to the (2S)-2-hydroxy-3-oxobutyl phosphate binding site.

Belongs to the DMRL synthase family.

The enzyme catalyses (2S)-2-hydroxy-3-oxobutyl phosphate + 5-amino-6-(D-ribitylamino)uracil = 6,7-dimethyl-8-(1-D-ribityl)lumazine + phosphate + 2 H2O + H(+). Its pathway is cofactor biosynthesis; riboflavin biosynthesis; riboflavin from 2-hydroxy-3-oxobutyl phosphate and 5-amino-6-(D-ribitylamino)uracil: step 1/2. Functionally, catalyzes the formation of 6,7-dimethyl-8-ribityllumazine by condensation of 5-amino-6-(D-ribitylamino)uracil with 3,4-dihydroxy-2-butanone 4-phosphate. This is the penultimate step in the biosynthesis of riboflavin. The sequence is that of 6,7-dimethyl-8-ribityllumazine synthase from Clostridium perfringens (strain 13 / Type A).